Here is a 947-residue protein sequence, read N- to C-terminus: MEFSWGSGQESRRLLLLLLLLAAWEAGNGQLHYSVSEEAKHGTFVGRIAQDLGLELAELVPRLFRVASKGRGGLLEVNLQNGILFVNSRIDREELCRRSAECSIHLEVIVDRPLQVFHVDVEVRDINDNPPVFPATQKNLSIAESRPLDSRFPLEGASDADIGENALLTYRLSPNEYFSLEKPPDDELVKGLGLILRKSLDREEAPEIFLVLTATDGGKPELTGTVQLLITVLDANDNAPAFDRTIYKVRLLENVPNGTLVIKLNASDLDEGLNGDIVYSFSNDISPNVKSKFHIDPITGQIIVKGYIDFEESKSYEIIVEGIDKGQLPLSGHCRVIVEVEDNNDNVPDLEFKSLSLPIREDAPLGTVIALISVSDKDMGVNGLVTCSLTSHVPFKLVSTFKNYYSLVLDSALDRESVSAYELVVTARDGGSPSLWATASVSVEVADVNDNAPAFAQPEYTVFVKENNPPGCHIFTVSAWDADAQENALVSYSLVERRVGERALSSYVSVHAESGKVYALQPLDHEELELLQFQVTARDAGVPPLGSNVTLQVFVLDENDNAPALLAPRAGGTGGAVSELVPWSVGVGHVVAKVRAVDADSGYNAWLSYELQPGTGGARIPFRVGLYTGEISTTRALDETDAPRHRLLVLVKDHGEPALTATATVLVSLVESGQAPKASSRALVGAVGPDAALVDVNVYLIIAICAVSSLLVLTLLLYTALRCSALPTEGACAPGKPTLVCSSAVGSWSYSQQRRPRVCSGEGPPKTDLMAFSPSLPDSRDREDQLQTTEESFAKPRQPNPDWRYSASLRAGMHSSVHLEEAGILRAGPGGPDQQWPTVSSATPEPEAGEVSPPVGAGVNSNSWTFKYGPGNPKQSGPGELPDKFIIPGSPAIISIRQEPTNSQIDKSDFITFGKKEETKKKKKKKKGNKTQEKKEKGNSTTDNSDQ.

The signal sequence occupies residues 1–29 (MEFSWGSGQESRRLLLLLLLLAAWEAGNG). Cadherin domains are found at residues 30-133 (QLHY…PPVF), 134-242 (PATQ…APAF), 243-350 (DRTI…VPDL), 351-455 (EFKS…APAF), 456-565 (AQPE…APAL), and 588-678 (GHVV…APKA). The Extracellular portion of the chain corresponds to 30–697 (QLHYSVSEEA…GPDAALVDVN (668 aa)). C96 and C102 are disulfide-bonded. N139, N257, and N265 each carry an N-linked (GlcNAc...) asparagine glycan. The N-linked (GlcNAc...) asparagine glycan is linked to N548. A helical membrane pass occupies residues 698 to 718 (VYLIIAICAVSSLLVLTLLLY). Over 719–947 (TALRCSALPT…GNSTTDNSDQ (229 aa)) the chain is Cytoplasmic. PXXP repeat units lie at residues 734 to 737 (PGKP), 774 to 777 (PSLP), 796 to 799 (PRQP), 829 to 832 (PGGP), 870 to 873 (PGNP), and 888 to 891 (PGSP). The tract at residues 734 to 891 (PGKPTLVCSS…PDKFIIPGSP (158 aa)) is 6 X 4 AA repeats of P-X-X-P. The interval 738-947 (TLVCSSAVGS…GNSTTDNSDQ (210 aa)) is required for interaction with FYN. Disordered stretches follow at residues 754–805 (RRPR…DWRY), 828–853 (GPGG…EVSP), and 868–947 (YGPG…NSDQ). The span at 906–920 (DKSDFITFGKKEETK) shows a compositional bias: basic and acidic residues.

As to quaternary structure, forms homodimers in trans (molecules expressed by two different cells). Forms promiscuous heterodimers in cis (at the plasma membrane of the same cell) with other protocadherins. Interacts with FYN.

The protein resides in the cell membrane. Functionally, calcium-dependent cell-adhesion protein involved in cells self-recognition and non-self discrimination. Thereby, it is involved in the establishment and maintenance of specific neuronal connections in the brain. The protein is Protocadherin alpha-4 of Homo sapiens (Human).